We begin with the raw amino-acid sequence, 623 residues long: Protein EDS1L (623 aa).

Residue Ala-2 is modified to N-acetylalanine. Catalysis depends on Ser-123, which acts as the Nucleophile. Active-site charge relay system residues include Asp-187 and His-317.

In terms of assembly, homodimer. Interacts with RPS4, RPS6, SNC1, SRFR1, AvrRps4 and HopA1. Interacts with PAD4 (via N-terminus). Interacts with SAG101. EDS1-SAG101 and EDS1-PAD4 form separate complexes in pathogen-unchallenged cells.

The protein resides in the nucleus. It localises to the cytoplasm. The protein localises to the microsome. Positive regulator of basal resistance and of effector-triggered immunity specifically mediated by TIR-NB-LRR resistance proteins. Disruption by bacterial effector of EDS1-TIR-NB-LRR resistance protein interactions constitutes the first step in resistance activation. Triggers early plant defenses and hypersensitive response independently of PAD4, and then recruits PAD4 to potentiate plant defenses through the accumulation of salicylic acid. Nuclear localization is essential for basal and TIR-NB-LRR-conditioned immunity and for reprogramming defense gene expression, while cytoplasmic EDS1 is required to induce a complete immune response. Heterodimerization with PAD4 or SGA101 is necessary for TNL-mediated effector-triggered immunity. Contributes to nonhost resistance against E.amylovora. Has no direct lipase activity. The polypeptide is Protein EDS1L (Arabidopsis thaliana (Mouse-ear cress)).